We begin with the raw amino-acid sequence, 106 residues long: Circadian clock oscillator protein KaiB (106 aa).

Belongs to the KaiB family. The KaiABC complex composition changes during the circadian cycle to control KaiC phosphorylation. Complexes KaiC(6), KaiA(2-4):KaiC(6), KaiB(6):KaiC(6) and KaiC(6):KaiB(6):KaiA(12) are among the most important forms, many form cooperatively. Undergoes a major conformational rearrangment; in the free state forms homotetramers as a dimer of dimers. When bound to the CI domain of KaiC switches to a monomeric thioredoxin-fold (KaiB(fs)). KaiB(fs) binds CikA, leading it to dephosphorylate phospho-RpaA.

Functionally, key component of the KaiABC oscillator complex, which constitutes the main circadian regulator in cyanobacteria. Complex composition changes during the circadian cycle to control KaiC phosphorylation. KaiA stimulates KaiC autophosphorylation, while KaiB sequesters KaiA, leading to KaiC autodephosphorylation. Phospho-Ser-431 KaiC accumulation triggers binding of KaiB to form the KaiB(6):KaiC(6) complex, leading to changes in output regulators CikA and SasA. KaiB switches to a thioredoxin-like fold (KaiB(fs)) when bound to KaiC. KaiB(6):KaiC(6) formation exposes a site for KaiA binding that sequesters KaiA from KaiC, making the KaiC(6):KaiB(6):KaiA(12) complex that results in KaiC autodephosphorylation. In terms of biological role, a metamorphic protein which reversibly switches between an inactive tetrameric fold and a rare, thioredoxin-like monomeric fold (KaiB(fs)). KaiB(fs) binds phospho-KaiC, KaiA and CikA. KaiA and CikA compete for binding to KaiB(fs), and KaiB(fs) and SasA compete for binding to KaiC, thus the clock oscillator and output signal pathway are tightly coupled. This chain is Circadian clock oscillator protein KaiB, found in Gloeothece citriformis (strain PCC 7424) (Cyanothece sp. (strain PCC 7424)).